We begin with the raw amino-acid sequence, 447 residues long: Large ribosomal subunit protein bL27m (447 aa).

Composition is skewed to basic and acidic residues over residues 377 to 402 (QREA…KAEK) and 409 to 447 (KVEK…EKKD). The interval 377–447 (QREAKKAREG…KKDSKTEKKD (71 aa)) is disordered.

This sequence belongs to the bacterial ribosomal protein bL27 family. As to quaternary structure, component of the mitochondrial large ribosomal subunit (mt-LSU). Mature N.crassa 74S mitochondrial ribosomes consist of a small (37S) and a large (54S) subunit. The 37S small subunit contains a 16S ribosomal RNA (16S mt-rRNA) and 32 different proteins. The 54S large subunit contains a 23S rRNA (23S mt-rRNA) and 42 different proteins.

Its subcellular location is the mitochondrion. Its function is as follows. Component of the mitochondrial ribosome (mitoribosome), a dedicated translation machinery responsible for the synthesis of mitochondrial genome-encoded proteins, including at least some of the essential transmembrane subunits of the mitochondrial respiratory chain. The mitoribosomes are attached to the mitochondrial inner membrane and translation products are cotranslationally integrated into the membrane. The polypeptide is Large ribosomal subunit protein bL27m (mrp7) (Neurospora crassa (strain ATCC 24698 / 74-OR23-1A / CBS 708.71 / DSM 1257 / FGSC 987)).